We begin with the raw amino-acid sequence, 398 residues long: MSTAFLTLIAVIVCILFRILNVHSQPLKPSVWCLDAHFLDCLYKIAPVLREPYIPPRLWGFSGHVQTVLHSIVGRVRCPWPLGERVYMSLKDGSTLTYDLYQPLNEQEDDITVAICPGIANSSESVYIRTFVHLAQCNGYRCAVLNHIGALRSVQVTSTRIFTYGHTEDFAAMVEHLHQKYRQSRIVAVGFSLGGNLVTKYMGEDQKTKPDKVIGGISICQGYNAVEGTKWLLNWQNFRRFYLYIMTENVKSIILRHRHILLSDEVKARHNLNEREIIAAATLPELDEAYTRRVYNFPSTQELYKWSSSLFYFDTIKKPMIFINAKDDPLIPEDLLHPIKEYATTRQNTAYVEVAHGGHLGFYEGGFLYPNPVTWLDRTLVAMVGSLVMMHEVGKVAP.

Residues 1-4 (MSTA) are Cytoplasmic-facing. The helical; Signal-anchor for type II membrane protein transmembrane segment at 5 to 22 (FLTLIAVIVCILFRILNV) threads the bilayer. Topologically, residues 23–398 (HSQPLKPSVW…MMHEVGKVAP (376 aa)) are extracellular. Positions 113 to 365 (VAICPGIANS…HGGHLGFYEG (253 aa)) constitute an AB hydrolase-1 domain. Catalysis depends on charge relay system residues serine 192, aspartate 328, and histidine 359.

The protein belongs to the AB hydrolase superfamily. AB hydrolase 4 family.

The protein localises to the membrane. The polypeptide is Abhydrolase domain-containing protein 2 (Hydr2) (Drosophila melanogaster (Fruit fly)).